The chain runs to 122 residues: Large ribosomal subunit protein uL14 (122 aa).

It belongs to the universal ribosomal protein uL14 family. In terms of assembly, part of the 50S ribosomal subunit. Forms a cluster with proteins L3 and L19. In the 70S ribosome, L14 and L19 interact and together make contacts with the 16S rRNA in bridges B5 and B8.

Functionally, binds to 23S rRNA. Forms part of two intersubunit bridges in the 70S ribosome. The chain is Large ribosomal subunit protein uL14 from Nautilia profundicola (strain ATCC BAA-1463 / DSM 18972 / AmH).